The sequence spans 100 residues: Urease subunit gamma (100 aa).

The protein belongs to the urease gamma subunit family. In terms of assembly, heterotrimer of UreA (gamma), UreB (beta) and UreC (alpha) subunits. Three heterotrimers associate to form the active enzyme.

The protein localises to the cytoplasm. The catalysed reaction is urea + 2 H2O + H(+) = hydrogencarbonate + 2 NH4(+). It participates in nitrogen metabolism; urea degradation; CO(2) and NH(3) from urea (urease route): step 1/1. The polypeptide is Urease subunit gamma (Synechococcus sp. (strain WH7805)).